The primary structure comprises 306 residues: D-alanine--D-alanine ligase B (306 aa).

The region spanning 101-303 (KLLWQGAGLP…FSQLVVRILE (203 aa)) is the ATP-grasp domain. 134-189 (ISALGLPVIVKPSREGSSVGMSKVVAENALQDALRLAFQHDEEVLIEKWLSGPEFT) contributes to the ATP binding site. Residues Asp-257, Glu-270, and Asn-272 each contribute to the Mg(2+) site.

It belongs to the D-alanine--D-alanine ligase family. It depends on Mg(2+) as a cofactor. Mn(2+) is required as a cofactor.

The protein resides in the cytoplasm. It catalyses the reaction 2 D-alanine + ATP = D-alanyl-D-alanine + ADP + phosphate + H(+). Its pathway is cell wall biogenesis; peptidoglycan biosynthesis. Functionally, cell wall formation. The sequence is that of D-alanine--D-alanine ligase B from Shigella flexneri.